The chain runs to 370 residues: UPF0284 protein PCC7424_2681 (370 aa).

The protein belongs to the UPF0284 family.

This Gloeothece citriformis (strain PCC 7424) (Cyanothece sp. (strain PCC 7424)) protein is UPF0284 protein PCC7424_2681.